The primary structure comprises 120 residues: MFLLHEYDIFWAFLMISSVIPILAFIISGVLAPISEGPEKLSSYESGIEPIGDAWIQFRIRYYMFALVFVVFDVETVFLYPWAVSFDVLGVSVFIEALIFVLIPVVGSVYAWRKGALEWS.

Transmembrane regions (helical) follow at residues 9-29 (IFWA…IISG), 64-84 (MFAL…PWAV), and 88-108 (VLGV…VVGS).

This sequence belongs to the complex I subunit 3 family. NDH is composed of at least 16 different subunits, 5 of which are encoded in the nucleus.

It localises to the plastid. It is found in the chloroplast thylakoid membrane. It catalyses the reaction a plastoquinone + NADH + (n+1) H(+)(in) = a plastoquinol + NAD(+) + n H(+)(out). It carries out the reaction a plastoquinone + NADPH + (n+1) H(+)(in) = a plastoquinol + NADP(+) + n H(+)(out). In terms of biological role, NDH shuttles electrons from NAD(P)H:plastoquinone, via FMN and iron-sulfur (Fe-S) centers, to quinones in the photosynthetic chain and possibly in a chloroplast respiratory chain. The immediate electron acceptor for the enzyme in this species is believed to be plastoquinone. Couples the redox reaction to proton translocation, and thus conserves the redox energy in a proton gradient. The sequence is that of NAD(P)H-quinone oxidoreductase subunit 3, chloroplastic from Nuphar advena (Common spatterdock).